A 426-amino-acid chain; its full sequence is Enolase (426 aa).

(2R)-2-phosphoglycerate is bound at residue Q163. Residue E205 is the Proton donor of the active site. Mg(2+) is bound by residues D242, E286, and D313. (2R)-2-phosphoglycerate contacts are provided by K338, R367, S368, and K389. Catalysis depends on K338, which acts as the Proton acceptor.

The protein belongs to the enolase family. Mg(2+) serves as cofactor.

The protein localises to the cytoplasm. The protein resides in the secreted. It localises to the cell surface. The enzyme catalyses (2R)-2-phosphoglycerate = phosphoenolpyruvate + H2O. Its pathway is carbohydrate degradation; glycolysis; pyruvate from D-glyceraldehyde 3-phosphate: step 4/5. Its function is as follows. Catalyzes the reversible conversion of 2-phosphoglycerate (2-PG) into phosphoenolpyruvate (PEP). It is essential for the degradation of carbohydrates via glycolysis. The polypeptide is Enolase (Helicobacter pylori (strain J99 / ATCC 700824) (Campylobacter pylori J99)).